The following is a 460-amino-acid chain: Argininosuccinate lyase (460 aa).

The protein belongs to the lyase 1 family. Argininosuccinate lyase subfamily.

The protein localises to the cytoplasm. The catalysed reaction is 2-(N(omega)-L-arginino)succinate = fumarate + L-arginine. Its pathway is amino-acid biosynthesis; L-arginine biosynthesis; L-arginine from L-ornithine and carbamoyl phosphate: step 3/3. In Actinobacillus succinogenes (strain ATCC 55618 / DSM 22257 / CCUG 43843 / 130Z), this protein is Argininosuccinate lyase.